The primary structure comprises 87 residues: Elastase inhibitor AFLEI (87 aa).

An N-terminal signal peptide occupies residues 1 to 19; it reads MKFSLACLLALAGLQAALA. A disulfide bridge connects residues cysteine 24 and cysteine 86.

It localises to the secreted. Elastase inhibitor. This Aspergillus fumigatus (strain CBS 144.89 / FGSC A1163 / CEA10) (Neosartorya fumigata) protein is Elastase inhibitor AFLEI.